Here is a 335-residue protein sequence, read N- to C-terminus: Glucokinase (335 aa).

11-16 is an ATP binding site; it reads ADIGGT.

Belongs to the bacterial glucokinase family.

The protein localises to the cytoplasm. It carries out the reaction D-glucose + ATP = D-glucose 6-phosphate + ADP + H(+). In Xanthomonas oryzae pv. oryzae (strain MAFF 311018), this protein is Glucokinase.